Here is a 624-residue protein sequence, read N- to C-terminus: MGHSPSRHNACGGGGGDGESPPSPLPSRFERFRRRLRLRHRDRAGRPGGDAHASESGTGRAIAVDEFAGIARIRIVKEKKVVVETNGPHIARISVFETNRFSKNTLVGYCEVDLFELLTKDLDEHSEVLSLLDPSSSATIVGSISISCYIEDPVETEQSFARRVLAIVDYNEDGELSLSEFSDLMKAFGNKLAVAKIEELFRQADKNGDGIVDMDELAALLANQQEKEPLISNCPVCGEILGKHDKINDMIHMTLCFDEGTGNQIMTGGFLTDKQASYGWMFKLSEWAHFSSYDVGLHSGSTASHILVFDRRTKRLVEEVIDGKIVLSMRALYQSKVGLTLIDTGVKDLLKNLSEKQGKKMSSPESAKDIPKFLELFKDQINLDEVKDPLESFKTFNEFFVRQLKPGARPIACYEQDTIATCAADSRLMTFSSVDESTRLWIKGRKFSIEGLLGKDVHSDALCNGSLVIFRLAPQDYHRFHVPVSGTLEKFVEIPGCLYTVNPIAVNSKYCNVFTENKRVVSIISTSEFGKVAFVAIGATMVGSIEFLKEEGDYVHKGDEFGYFAFGGSTVICVFEKDAIEFDADLLANSARSLETLVSVGMRLGVSTRNRDLQPQELEKCSLE.

Positions 1 to 30 (MGHSPSRHNACGGGGGDGESPPSPLPSRFE) are disordered. Residues 16–129 (GDGESPPSPL…KDLDEHSEVL (114 aa)) enclose the C2 domain. EF-hand domains follow at residues 156–191 (TEQSFARRVLAIVDYNEDGELSLSEFSDLMKAFGNK) and 192–227 (LAVAKIEELFRQADKNGDGIVDMDELAALLANQQEK). Positions 169, 171, 173, 175, 180, 205, 207, 209, and 216 each coordinate Ca(2+). Catalysis depends on charge relay system; for autoendoproteolytic cleavage activity residues D425, H481, and S569. Residue S569 is the Schiff-base intermediate with substrate; via pyruvic acid; for decarboxylase activity of the active site. At S569 the chain carries Pyruvic acid (Ser); by autocatalysis.

Belongs to the phosphatidylserine decarboxylase family. PSD-B subfamily. Eukaryotic type II sub-subfamily. In terms of assembly, heterodimer of a large membrane-associated beta subunit and a small pyruvoyl-containing alpha subunit. Pyruvate is required as a cofactor. In terms of processing, is synthesized initially as an inactive proenzyme. Formation of the active enzyme involves a self-maturation process in which the active site pyruvoyl group is generated from an internal serine residue via an autocatalytic post-translational modification. Two non-identical subunits are generated from the proenzyme in this reaction, and the pyruvate is formed at the N-terminus of the alpha chain, which is derived from the carboxyl end of the proenzyme. The autoendoproteolytic cleavage occurs by a canonical serine protease mechanism, in which the side chain hydroxyl group of the serine supplies its oxygen atom to form the C-terminus of the beta chain, while the remainder of the serine residue undergoes an oxidative deamination to produce ammonia and the pyruvoyl prosthetic group on the alpha chain. During this reaction, the Ser that is part of the protease active site of the proenzyme becomes the pyruvoyl prosthetic group, which constitutes an essential element of the active site of the mature decarboxylase.

It is found in the vacuole membrane. It localises to the endoplasmic reticulum membrane. It catalyses the reaction a 1,2-diacyl-sn-glycero-3-phospho-L-serine + H(+) = a 1,2-diacyl-sn-glycero-3-phosphoethanolamine + CO2. The protein operates within phospholipid metabolism; phosphatidylethanolamine biosynthesis; phosphatidylethanolamine from CDP-diacylglycerol: step 2/2. Functionally, catalyzes the formation of phosphatidylethanolamine (PtdEtn) from phosphatidylserine (PtdSer). Plays a central role in phospholipid metabolism and in the interorganelle trafficking of phosphatidylserine. This is Phosphatidylserine decarboxylase proenzyme 2 from Oryza sativa subsp. japonica (Rice).